The chain runs to 68 residues: ATP synthase protein 8 (68 aa).

The chain crosses the membrane as a helical span at residues 8 to 24; it reads TWLTIITPTLLALFLIT. Lys54 is subject to N6-acetyllysine; alternate. Lys54 is subject to N6-succinyllysine; alternate. At Lys57 the chain carries N6-acetyllysine.

It belongs to the ATPase protein 8 family. In terms of assembly, F-type ATPases have 2 components, CF(1) - the catalytic core - and CF(0) - the membrane proton channel. Component of an ATP synthase complex composed of ATP5PB, ATP5MC1, ATP5F1E, ATP5PD, ATP5ME, ATP5PF, ATP5MF, MT-ATP6, MT-ATP8, ATP5F1A, ATP5F1B, ATP5F1D, ATP5F1C, ATP5PO, ATP5MG, ATP5MK and ATP5MJ. Interacts with PRICKLE3.

The protein resides in the mitochondrion membrane. Its function is as follows. Mitochondrial membrane ATP synthase (F(1)F(0) ATP synthase or Complex V) produces ATP from ADP in the presence of a proton gradient across the membrane which is generated by electron transport complexes of the respiratory chain. F-type ATPases consist of two structural domains, F(1) - containing the extramembraneous catalytic core and F(0) - containing the membrane proton channel, linked together by a central stalk and a peripheral stalk. During catalysis, ATP synthesis in the catalytic domain of F(1) is coupled via a rotary mechanism of the central stalk subunits to proton translocation. Part of the complex F(0) domain. Minor subunit located with subunit a in the membrane. The chain is ATP synthase protein 8 (MT-ATP8) from Pongo pygmaeus (Bornean orangutan).